The chain runs to 453 residues: MKLLTRAGSFSRFYSLKVAPKVKATAAPAGAPPQPQDLEFTKLPNGLVIASLENYSPVSRIGLFIKAGSRYEDFSNLGTTHLLRLTSSLTTKGASSFKITRGIEAVGGKLSVTATRENMAYTVECLRGDVDILMEFLLNVTTAPEFRRWEVADLQPQLKIDKAVAFQNPQTHVIENLHAAAYRNALANPLYCPDYRIGKVTSEELHYFVQNHFTSARMALIGLGVSHPVLKQVAEQFLNMRGGLGLSGAKANYRGGEIREQNGDSLVHAAFVAESAVAGSAEANAFSVLQHVLGAGPHVKRGSNTTSHLHQAVAKATQQPFDVSAFNASYSDSGLFGIYTISQATAAGDVIKAAYNQVKTIAQGNLSNTDVQAAKNKLKAGYLMSVESSECFLEEVGSQALVAGSYMPPSTVLQQIDSVANADIINAAKKFVSGQKSMAASGNLGHTPFVDEL.

A mitochondrion-targeting transit peptide spans 1 to 14 (MKLLTRAGSFSRFY). Residues lysine 66, lysine 199, and lysine 250 each carry the N6-acetyllysine modification.

It belongs to the peptidase M16 family. UQCRC2/QCR2 subfamily. In terms of assembly, component of the ubiquinol-cytochrome c oxidoreductase (cytochrome b-c1 complex, complex III, CIII), a multisubunit enzyme composed of 11 subunits. The complex is composed of 3 respiratory subunits cytochrome b, cytochrome c1 and Rieske protein UQCRFS1, 2 core protein subunits UQCRC1/QCR1 and UQCRC2/QCR2, and 6 low-molecular weight protein subunits UQCRH/QCR6, UQCRB/QCR7, UQCRQ/QCR8, UQCR10/QCR9, UQCR11/QCR10 and subunit 9, the cleavage product of Rieske protein UQCRFS1. The complex exists as an obligatory dimer and forms supercomplexes (SCs) in the inner mitochondrial membrane with NADH-ubiquinone oxidoreductase (complex I, CI) and cytochrome c oxidase (complex IV, CIV), resulting in different assemblies (supercomplex SCI(1)III(2)IV(1) and megacomplex MCI(2)III(2)IV(2)). Interacts with RAB5IF. Interacts with STMP1.

It is found in the mitochondrion inner membrane. Functionally, component of the ubiquinol-cytochrome c oxidoreductase, a multisubunit transmembrane complex that is part of the mitochondrial electron transport chain which drives oxidative phosphorylation. The respiratory chain contains 3 multisubunit complexes succinate dehydrogenase (complex II, CII), ubiquinol-cytochrome c oxidoreductase (cytochrome b-c1 complex, complex III, CIII) and cytochrome c oxidase (complex IV, CIV), that cooperate to transfer electrons derived from NADH and succinate to molecular oxygen, creating an electrochemical gradient over the inner membrane that drives transmembrane transport and the ATP synthase. The cytochrome b-c1 complex catalyzes electron transfer from ubiquinol to cytochrome c, linking this redox reaction to translocation of protons across the mitochondrial inner membrane, with protons being carried across the membrane as hydrogens on the quinol. In the process called Q cycle, 2 protons are consumed from the matrix, 4 protons are released into the intermembrane space and 2 electrons are passed to cytochrome c. The 2 core subunits UQCRC1/QCR1 and UQCRC2/QCR2 are homologous to the 2 mitochondrial-processing peptidase (MPP) subunits beta-MPP and alpha-MPP respectively, and they seem to have preserved their MPP processing properties. May be involved in the in situ processing of UQCRFS1 into the mature Rieske protein and its mitochondrial targeting sequence (MTS)/subunit 9 when incorporated into complex III. In Homo sapiens (Human), this protein is Cytochrome b-c1 complex subunit 2, mitochondrial (UQCRC2).